A 367-amino-acid polypeptide reads, in one-letter code: DNA replication and repair protein RecF (367 aa).

30 to 37 (GDNAQGKT) is a binding site for ATP.

Belongs to the RecF family.

Its subcellular location is the cytoplasm. Functionally, the RecF protein is involved in DNA metabolism; it is required for DNA replication and normal SOS inducibility. RecF binds preferentially to single-stranded, linear DNA. It also seems to bind ATP. The protein is DNA replication and repair protein RecF of Clostridium beijerinckii (strain ATCC 51743 / NCIMB 8052) (Clostridium acetobutylicum).